A 91-amino-acid chain; its full sequence is Small ribosomal subunit protein bS16 (91 aa).

Belongs to the bacterial ribosomal protein bS16 family.

The sequence is that of Small ribosomal subunit protein bS16 from Lacticaseibacillus casei (strain BL23) (Lactobacillus casei).